A 358-amino-acid chain; its full sequence is GTPase Obg (358 aa).

Residues methionine 1–isoleucine 158 form the Obg domain. In terms of domain architecture, OBG-type G spans alanine 159–arginine 355. GTP-binding positions include glycine 165–serine 172, phenylalanine 190–isoleucine 194, aspartate 212–glycine 215, serine 280–aspartate 283, and serine 336–alanine 338. The Mg(2+) site is built by serine 172 and threonine 192.

It belongs to the TRAFAC class OBG-HflX-like GTPase superfamily. OBG GTPase family. Monomer. Mg(2+) is required as a cofactor.

It localises to the cytoplasm. Functionally, an essential GTPase which binds GTP, GDP and possibly (p)ppGpp with moderate affinity, with high nucleotide exchange rates and a fairly low GTP hydrolysis rate. Plays a role in control of the cell cycle, stress response, ribosome biogenesis and in those bacteria that undergo differentiation, in morphogenesis control. The chain is GTPase Obg from Wolinella succinogenes (strain ATCC 29543 / DSM 1740 / CCUG 13145 / JCM 31913 / LMG 7466 / NCTC 11488 / FDC 602W) (Vibrio succinogenes).